The following is a 522-amino-acid chain: MEKSQIYLELDGFQQHNFLYPLLFREYIYALAQDHGLNRSTISLENGGYDNKSSSLSGKRLITLLYQQIHLSISANDSNPNQFIGHNNNLYSQMISEGFAVIVEIPFSLQLVSFLEGKEMAKSHNFQSIHSIFPFFEDNFSHLNYVLDVLIPHPIRPEILVQTFRYWVKDASSLHLLRFFLHEYFNWNSLITPKKSISSFSTSNPRFFLFLYNFHVYEYEFLFFFLRNQSSHLRLTSSGVLLERIHFYGKVDYLVEVFANGFQDILRLYKDLFMHYVRYQGKAILASKDTPLLMNKWKNYFVNLWQWHFHVWSQPGRVHINHLHKDSINFLGYLSSRRQNPLVVRSQMLENAFLIDNAMKKFETAVPIIPMIESLTKARFCNPLGNPISKPTWADSSDCHIIGRFVRICRNLSHYHSGSSKKKSLYRIKYILRVSCVKSLVRKHKSTVRVFLKRLGSEFFQXFLTEEEXVLSLIFSRASFTWRXLYXGRVXYXDIICINDLVNHDKLXXXXXXXXXXXXXXX.

It belongs to the intron maturase 2 family. MatK subfamily.

The protein resides in the plastid. It localises to the chloroplast. In terms of biological role, usually encoded in the trnK tRNA gene intron. Probably assists in splicing its own and other chloroplast group II introns. This chain is Maturase K, found in Sapindus saponaria (Soapberry).